The primary structure comprises 65 residues: Large ribosomal subunit protein bL35 (65 aa).

The tract at residues 24–48 (RRKAGKSHLLEHKSSDKKRSMSKTT) is disordered. Positions 31–42 (HLLEHKSSDKKR) are enriched in basic and acidic residues.

The protein belongs to the bacterial ribosomal protein bL35 family.

In Nostoc punctiforme (strain ATCC 29133 / PCC 73102), this protein is Large ribosomal subunit protein bL35.